We begin with the raw amino-acid sequence, 542 residues long: CTP synthase (542 aa).

The amidoligase domain stretch occupies residues 1–265; it reads MTRYIFVTGG…DQLVIERFGL (265 aa). Ser13 lines the CTP pocket. Ser13 provides a ligand contact to UTP. Residues 14-19 and Asp71 each bind ATP; that span reads SLGKGI. Positions 71 and 139 each coordinate Mg(2+). Residues 146 to 148, 186 to 191, and Lys222 contribute to the CTP site; these read DIE and KTKPTQ. Residues 186 to 191 and Lys222 contribute to the UTP site; that span reads KTKPTQ. Residues 290-541 form the Glutamine amidotransferase type-1 domain; that stretch reads TIAMVGKYME…VEAALANKKG (252 aa). Residue Gly351 coordinates L-glutamine. The Nucleophile; for glutamine hydrolysis role is filled by Cys378. L-glutamine contacts are provided by residues 379–382, Glu402, and Arg469; that span reads LGMQ. Catalysis depends on residues His514 and Glu516.

Belongs to the CTP synthase family. Homotetramer.

It catalyses the reaction UTP + L-glutamine + ATP + H2O = CTP + L-glutamate + ADP + phosphate + 2 H(+). It carries out the reaction L-glutamine + H2O = L-glutamate + NH4(+). The enzyme catalyses UTP + NH4(+) + ATP = CTP + ADP + phosphate + 2 H(+). It functions in the pathway pyrimidine metabolism; CTP biosynthesis via de novo pathway; CTP from UDP: step 2/2. With respect to regulation, allosterically activated by GTP, when glutamine is the substrate; GTP has no effect on the reaction when ammonia is the substrate. The allosteric effector GTP functions by stabilizing the protein conformation that binds the tetrahedral intermediate(s) formed during glutamine hydrolysis. Inhibited by the product CTP, via allosteric rather than competitive inhibition. Functionally, catalyzes the ATP-dependent amination of UTP to CTP with either L-glutamine or ammonia as the source of nitrogen. Regulates intracellular CTP levels through interactions with the four ribonucleotide triphosphates. This is CTP synthase from Marinobacter nauticus (strain ATCC 700491 / DSM 11845 / VT8) (Marinobacter aquaeolei).